The sequence spans 493 residues: Chromosomal replication initiator protein DnaA (493 aa).

The tract at residues 1–105 (MSDTIQQEAP…LMYSIVIDKS (105 aa)) is domain I, interacts with DnaA modulators. The domain II stretch occupies residues 105 to 152 (SQGQPVTIELPHQIDAAPAERSVRPEAPGQKASAERERLEIARPRFES). Residues 121-140 (APAERSVRPEAPGQKASAER) are disordered. A domain III, AAA+ region region spans residues 153–370 (NLNPKYTFST…GCIVKLLAAH (218 aa)). 4 residues coordinate ATP: Gly198, Gly200, Lys201, and Thr202. Positions 371–493 (SLDNQEIDLQ…LRKRIEIMSM (123 aa)) are domain IV, binds dsDNA.

Belongs to the DnaA family. In terms of assembly, oligomerizes as a right-handed, spiral filament on DNA at oriC.

Its subcellular location is the cytoplasm. Its function is as follows. Plays an essential role in the initiation and regulation of chromosomal replication. ATP-DnaA binds to the origin of replication (oriC) to initiate formation of the DNA replication initiation complex once per cell cycle. Binds the DnaA box (a 9 base pair repeat at the origin) and separates the double-stranded (ds)DNA. Forms a right-handed helical filament on oriC DNA; dsDNA binds to the exterior of the filament while single-stranded (ss)DNA is stabiized in the filament's interior. The ATP-DnaA-oriC complex binds and stabilizes one strand of the AT-rich DNA unwinding element (DUE), permitting loading of DNA polymerase. After initiation quickly degrades to an ADP-DnaA complex that is not apt for DNA replication. Binds acidic phospholipids. In Chlorobaculum tepidum (strain ATCC 49652 / DSM 12025 / NBRC 103806 / TLS) (Chlorobium tepidum), this protein is Chromosomal replication initiator protein DnaA.